Reading from the N-terminus, the 511-residue chain is Glucans biosynthesis protein G (511 aa).

An N-terminal signal peptide occupies residues 1-22 (MMKMRWLSAAVMLTLYTSSSWA).

Belongs to the OpgD/OpgG family.

It is found in the periplasm. The protein operates within glycan metabolism; osmoregulated periplasmic glucan (OPG) biosynthesis. Functionally, involved in the biosynthesis of osmoregulated periplasmic glucans (OPGs). In Shigella boydii serotype 4 (strain Sb227), this protein is Glucans biosynthesis protein G.